Here is a 206-residue protein sequence, read N- to C-terminus: Protein Nef (206 aa).

Gly2 is lipidated: N-myristoyl glycine; by host. Position 6 is a phosphoserine; by host (Ser6). The tract at residues 62–65 is acidic; interacts with host PACS1 and PACS2; stabilizes the interaction of NEF/MHC-I with host AP1M1; necessary for MHC-I internalization; the sequence is EEEK. The tract at residues 69–78 is SH3-binding; interaction with Src family tyrosine kinases; sequence PVTPQVPLRP. The PxxP; stabilizes the interaction of NEF/MHC-I with host AP1M1; necessary for MHC-I internalization motif lies at 72-75; sequence PQVP. The segment at 108–124 is mediates dimerization, Nef-PTE1 interaction; it reads DILDLWIYHTQGYFPDW. A binding to ATP6V1H region spans residues 148–180; the sequence is VEPEKLEEANKGENTSLLHPVSLHGMDDPEREV. The Dileucine internalization motif; necessary for CD4 internalization signature appears at 164–165; sequence LL. Residues 174 to 175 carry the Diacidic; necessary for CD4 internalization motif; that stretch reads DD.

This sequence belongs to the lentivirus primate group Nef protein family. In terms of assembly, monomer; cytosolic form. Homodimer; membrane bound form. Interacts with Nef associated p21-activated kinase (PAK2); this interaction activates PAK2. Associates with the Nef-MHC-I-AP1 complex; this complex is required for MHC-I internalization. Interacts (via C-terminus) with host PI3-kinase. Interacts with host PACS1; this interaction seems to be weak. Interacts with host PACS2. Interacts with host LCK and MAPK3; these interactions inhibit the kinase activity of the latter. Interacts with host ATP6V1H; this interaction may play a role in CD4 endocytosis. Associates with the CD4-Nef-AP2 complex; this complex is required for CD4 internalization. Interacts with host AP2 subunit alpha and AP2 subunit sigma2. Interacts with TCR-zeta chain; this interaction up-regulates the Fas ligand (FasL) surface expression. Interacts with host HCK, LYN, and SRC; these interactions activate the Src family kinases. Interacts with MAP3K5; this interaction inhibits the Fas and TNFR-mediated death signals. Interacts with beta-COP and PTE1. Interacts with human RACK1; this increases Nef phosphorylation by PKC. Interacts with TP53; this interaction decreases the half-life of TP53, protecting the infected cell against p53-mediated apoptosis. In terms of processing, the virion-associated Nef proteins are cleaved by the viral protease to release the soluble C-terminal core protein. Nef is probably cleaved concomitantly with viral structural proteins on maturation of virus particles. Post-translationally, myristoylated. Phosphorylated on serine residues, probably by host PKCdelta and theta.

Its subcellular location is the host cell membrane. The protein localises to the virion. The protein resides in the secreted. It is found in the host Golgi apparatus membrane. In terms of biological role, factor of infectivity and pathogenicity, required for optimal virus replication. Alters numerous pathways of T-lymphocyte function and down-regulates immunity surface molecules in order to evade host defense and increase viral infectivity. Alters the functionality of other immunity cells, like dendritic cells, monocytes/macrophages and NK cells. Functionally, in infected CD4(+) T-lymphocytes, down-regulates the surface MHC-I, mature MHC-II, CD4, CD28, CCR5 and CXCR4 molecules. Mediates internalization and degradation of host CD4 through the interaction of with the cytoplasmic tail of CD4, the recruitment of AP-2 (clathrin adapter protein complex 2), internalization through clathrin coated pits, and subsequent transport to endosomes and lysosomes for degradation. Diverts host MHC-I molecules to the trans-Golgi network-associated endosomal compartments by an endocytic pathway to finally target them for degradation. MHC-I down-regulation may involve AP-1 (clathrin adapter protein complex 1) or possibly Src family kinase-ZAP70/Syk-PI3K cascade recruited by PACS2. In consequence infected cells are masked for immune recognition by cytotoxic T-lymphocytes. Decreasing the number of immune receptors also prevents reinfection by more HIV particles (superinfection). Down-regulates host SERINC3 and SERINC5 thereby excluding these proteins from the viral particles. Virion infectivity is drastically higher when SERINC3 or SERINC5 are excluded from the viral envelope, because these host antiviral proteins impair the membrane fusion event necessary for subsequent virion penetration. Its function is as follows. Bypasses host T-cell signaling by inducing a transcriptional program nearly identical to that of anti-CD3 cell activation. Interaction with TCR-zeta chain up-regulates the Fas ligand (FasL). Increasing surface FasL molecules and decreasing surface MHC-I molecules on infected CD4(+) cells send attacking cytotoxic CD8+ T-lymphocytes into apoptosis. Plays a role in optimizing the host cell environment for viral replication without causing cell death by apoptosis. Protects the infected cells from apoptosis in order to keep them alive until the next virus generation is ready to strike. Inhibits the Fas and TNFR-mediated death signals by blocking MAP3K5/ASK1. Decreases the half-life of TP53, protecting the infected cell against p53-mediated apoptosis. Inhibits the apoptotic signals regulated by the Bcl-2 family proteins through the formation of a Nef/PI3-kinase/PAK2 complex that leads to activation of PAK2 and induces phosphorylation of host BAD. In terms of biological role, extracellular Nef protein targets CD4(+) T-lymphocytes for apoptosis by interacting with CXCR4 surface receptors. In Homo sapiens (Human), this protein is Protein Nef.